Consider the following 957-residue polypeptide: Glycine dehydrogenase (decarboxylating) (957 aa).

Lys-708 is subject to N6-(pyridoxal phosphate)lysine.

It belongs to the GcvP family. In terms of assembly, the glycine cleavage system is composed of four proteins: P, T, L and H. Requires pyridoxal 5'-phosphate as cofactor.

The catalysed reaction is N(6)-[(R)-lipoyl]-L-lysyl-[glycine-cleavage complex H protein] + glycine + H(+) = N(6)-[(R)-S(8)-aminomethyldihydrolipoyl]-L-lysyl-[glycine-cleavage complex H protein] + CO2. The glycine cleavage system catalyzes the degradation of glycine. The P protein binds the alpha-amino group of glycine through its pyridoxal phosphate cofactor; CO(2) is released and the remaining methylamine moiety is then transferred to the lipoamide cofactor of the H protein. This Shigella boydii serotype 4 (strain Sb227) protein is Glycine dehydrogenase (decarboxylating).